Here is an 89-residue protein sequence, read N- to C-terminus: Small ribosomal subunit protein uS15 (89 aa).

The span at 1–10 (MSITAERKAE) shows a compositional bias: basic and acidic residues. The interval 1-24 (MSITAERKAEVIQGNANKAGDTGS) is disordered.

The protein belongs to the universal ribosomal protein uS15 family. As to quaternary structure, part of the 30S ribosomal subunit. Forms a bridge to the 50S subunit in the 70S ribosome, contacting the 23S rRNA.

Its function is as follows. One of the primary rRNA binding proteins, it binds directly to 16S rRNA where it helps nucleate assembly of the platform of the 30S subunit by binding and bridging several RNA helices of the 16S rRNA. Functionally, forms an intersubunit bridge (bridge B4) with the 23S rRNA of the 50S subunit in the ribosome. The sequence is that of Small ribosomal subunit protein uS15 from Rhodopseudomonas palustris (strain BisB5).